We begin with the raw amino-acid sequence, 299 residues long: Tricarboxylate transport protein (299 aa).

3 Solcar repeats span residues 10 to 97, 109 to 199, and 212 to 297; these read VDPL…IKDM, TRGV…IKTL, and LSSG…VLVM. A run of 6 helical transmembrane segments spans residues 16-36, 66-86, 113-133, 174-193, 215-235, and 272-291; these read FLAGSLAGAAEACITYPFEFA, IGSIYVGCPAFIIGNTAKAGI, IAGLGAGLLESVAAVTPFEAI, GVLPVSMRQAANQAVRLGCY, GLTFLVGAFSGIVTVYSTMPL, and GATPRLGRLVLSGGIVFTIY.

It belongs to the mitochondrial carrier (TC 2.A.29) family.

It is found in the mitochondrion inner membrane. Functionally, transport of citrate across inner mitochondrial membrane. The chain is Tricarboxylate transport protein (CTP1) from Saccharomyces cerevisiae (strain ATCC 204508 / S288c) (Baker's yeast).